The primary structure comprises 394 residues: Na(+)/H(+) antiporter NhaA (394 aa).

11 helical membrane-spanning segments follow: residues 14-34 (AGGI…NSVF), 59-79 (LLMW…GMEV), 95-115 (IFPA…YWFI), 125-145 (GWAI…ALLS), 155-175 (FLLA…ALFF), 177-197 (NELS…LITM), 204-224 (GIIH…KSGV), 258-278 (WCAF…SLAG), 292-312 (ITLG…YLAV), 328-348 (VFAI…IAGL), and 362-382 (LSRL…YILL).

Belongs to the NhaA Na(+)/H(+) (TC 2.A.33) antiporter family.

Its subcellular location is the cell inner membrane. The enzyme catalyses Na(+)(in) + 2 H(+)(out) = Na(+)(out) + 2 H(+)(in). Na(+)/H(+) antiporter that extrudes sodium in exchange for external protons. The polypeptide is Na(+)/H(+) antiporter NhaA (Haemophilus ducreyi (strain 35000HP / ATCC 700724)).